We begin with the raw amino-acid sequence, 109 residues long: Putative double-stranded DNA mimic protein plu2488 (109 aa).

This sequence belongs to the putative dsDNA mimic protein family.

Its function is as follows. May act as a double-stranded DNA (dsDNA) mimic. Probably regulates the activity of a dsDNA-binding protein. The chain is Putative double-stranded DNA mimic protein plu2488 from Photorhabdus laumondii subsp. laumondii (strain DSM 15139 / CIP 105565 / TT01) (Photorhabdus luminescens subsp. laumondii).